Consider the following 459-residue polypeptide: tRNA modification GTPase MnmE (459 aa).

Residues Arg23, Glu88, and Arg127 each contribute to the (6S)-5-formyl-5,6,7,8-tetrahydrofolate site. One can recognise a TrmE-type G domain in the interval 223–381 (GLDVVIVGKP…LKEYIKDLFF (159 aa)). Asn233 is a K(+) binding site. Residues 233–238 (NVGKSS), 252–258 (TEIPGTT), and 277–280 (DTAG) contribute to the GTP site. Residue Ser237 coordinates Mg(2+). Positions 252, 254, and 257 each coordinate K(+). Thr258 provides a ligand contact to Mg(2+). Position 459 (Lys459) interacts with (6S)-5-formyl-5,6,7,8-tetrahydrofolate.

Belongs to the TRAFAC class TrmE-Era-EngA-EngB-Septin-like GTPase superfamily. TrmE GTPase family. Homodimer. Heterotetramer of two MnmE and two MnmG subunits. Requires K(+) as cofactor.

It is found in the cytoplasm. Its function is as follows. Exhibits a very high intrinsic GTPase hydrolysis rate. Involved in the addition of a carboxymethylaminomethyl (cmnm) group at the wobble position (U34) of certain tRNAs, forming tRNA-cmnm(5)s(2)U34. The polypeptide is tRNA modification GTPase MnmE (Clostridium tetani (strain Massachusetts / E88)).